The chain runs to 366 residues: Ferrochelatase (366 aa).

Residues histidine 209 and glutamate 290 each contribute to the Fe cation site.

It belongs to the ferrochelatase family.

The protein localises to the cytoplasm. It catalyses the reaction heme b + 2 H(+) = protoporphyrin IX + Fe(2+). It functions in the pathway porphyrin-containing compound metabolism; protoheme biosynthesis; protoheme from protoporphyrin-IX: step 1/1. In terms of biological role, catalyzes the ferrous insertion into protoporphyrin IX. The polypeptide is Ferrochelatase (Teredinibacter turnerae (strain ATCC 39867 / T7901)).